Here is a 183-residue protein sequence, read N- to C-terminus: Guanylate kinase (183 aa).

The region spanning 4 to 182 is the Guanylate kinase-like domain; sequence GRVVVLTGPS…AITALEAAIF (179 aa). An ATP-binding site is contributed by 11–18; that stretch reads GPSGVGKG.

This sequence belongs to the guanylate kinase family.

It localises to the cytoplasm. The enzyme catalyses GMP + ATP = GDP + ADP. It carries out the reaction dZMP + ATP = dZDP + ADP. It participates in purine metabolism. Essential for recycling GMP and indirectly, cGMP. Its function is as follows. (Microbial infection) Catalyzes the phosphorylation of dZMP to dZDP, when the bacterium is infected by a phage that produces the substrate for the synthesis of dZTP (2- amino-2'-deoxyadenosine 5'-triphosphate), which is then used by the phage as a DNA polymerase substrate. This Synechococcus sp. (strain ATCC 27144 / PCC 6301 / SAUG 1402/1) (Anacystis nidulans) protein is Guanylate kinase.